A 263-amino-acid polypeptide reads, in one-letter code: ATP synthase subunit a (263 aa).

The next 6 helical transmembrane spans lie at V26–S46, V86–I106, D130–I150, P166–A186, L195–A215, and L229–L249.

This sequence belongs to the ATPase A chain family. In terms of assembly, F-type ATPases have 2 components, CF(1) - the catalytic core - and CF(0) - the membrane proton channel. CF(1) has five subunits: alpha(3), beta(3), gamma(1), delta(1), epsilon(1). CF(0) has three main subunits: a(1), b(2) and c(9-12). The alpha and beta chains form an alternating ring which encloses part of the gamma chain. CF(1) is attached to CF(0) by a central stalk formed by the gamma and epsilon chains, while a peripheral stalk is formed by the delta and b chains.

The protein resides in the cell inner membrane. In terms of biological role, key component of the proton channel; it plays a direct role in the translocation of protons across the membrane. In Glaesserella parasuis serovar 5 (strain SH0165) (Haemophilus parasuis), this protein is ATP synthase subunit a.